A 403-amino-acid chain; its full sequence is S-adenosylmethionine synthase (403 aa).

Histidine 16 contributes to the ATP binding site. Aspartate 18 provides a ligand contact to Mg(2+). Glutamate 44 contacts K(+). Residues glutamate 57 and glutamine 100 each coordinate L-methionine. Residues 100 to 110 (QSSDIAQGVDR) form a flexible loop region. Residues 165 to 167 (DAK), aspartate 242, 248 to 249 (RK), alanine 265, and lysine 269 contribute to the ATP site. Aspartate 242 is a binding site for L-methionine. Position 273 (lysine 273) interacts with L-methionine.

This sequence belongs to the AdoMet synthase family. As to quaternary structure, homotetramer; dimer of dimers. It depends on Mg(2+) as a cofactor. Requires K(+) as cofactor.

Its subcellular location is the cytoplasm. The catalysed reaction is L-methionine + ATP + H2O = S-adenosyl-L-methionine + phosphate + diphosphate. It functions in the pathway amino-acid biosynthesis; S-adenosyl-L-methionine biosynthesis; S-adenosyl-L-methionine from L-methionine: step 1/1. Functionally, catalyzes the formation of S-adenosylmethionine (AdoMet) from methionine and ATP. The overall synthetic reaction is composed of two sequential steps, AdoMet formation and the subsequent tripolyphosphate hydrolysis which occurs prior to release of AdoMet from the enzyme. The chain is S-adenosylmethionine synthase from Nitrosococcus oceani (strain ATCC 19707 / BCRC 17464 / JCM 30415 / NCIMB 11848 / C-107).